The sequence spans 141 residues: Large ribosomal subunit protein uL11 (141 aa).

This sequence belongs to the universal ribosomal protein uL11 family. As to quaternary structure, part of the ribosomal stalk of the 50S ribosomal subunit. Interacts with L10 and the large rRNA to form the base of the stalk. L10 forms an elongated spine to which L12 dimers bind in a sequential fashion forming a multimeric L10(L12)X complex. In terms of processing, one or more lysine residues are methylated.

Forms part of the ribosomal stalk which helps the ribosome interact with GTP-bound translation factors. This Moorella thermoacetica (strain ATCC 39073 / JCM 9320) protein is Large ribosomal subunit protein uL11.